A 67-amino-acid polypeptide reads, in one-letter code: Metallothionein-A (67 aa).

The protein belongs to the metallothionein superfamily. Type 4 family.

Functionally, metallothioneins have a high content of cysteine residues that bind various heavy metals. The chain is Metallothionein-A from Sphaerechinus granularis (Purple sea urchin).